A 130-amino-acid chain; its full sequence is MATTKYYGTGRRKSSVARVYLVPGTGKITINKRDIDEYLGLETLKVVVRQPLVATETVDKFDVLVNVRGGGYTGQAGAIRHGIARALLQVDSEYRPVLKSAGFLTRDPRMKERKKYGLKAARRAPQFSKR.

It belongs to the universal ribosomal protein uS9 family.

This Agathobacter rectalis (strain ATCC 33656 / DSM 3377 / JCM 17463 / KCTC 5835 / VPI 0990) (Eubacterium rectale) protein is Small ribosomal subunit protein uS9.